A 185-amino-acid chain; its full sequence is Ribosome-recycling factor (185 aa).

It belongs to the RRF family.

Its subcellular location is the cytoplasm. In terms of biological role, responsible for the release of ribosomes from messenger RNA at the termination of protein biosynthesis. May increase the efficiency of translation by recycling ribosomes from one round of translation to another. This chain is Ribosome-recycling factor, found in Geobacter sulfurreducens (strain ATCC 51573 / DSM 12127 / PCA).